We begin with the raw amino-acid sequence, 212 residues long: Dihydrophenazinedicarboxylate synthase (212 aa).

S8 lines the substrate pocket. Residues 63–66 (RVIA) and 78–79 (CT) each bind FMN. Residue H80 coordinates substrate. Residues 84 to 85 (RK) and Q107 contribute to the FMN site. Substrate-binding residues include R129 and S137. Residues 142–143 (QS) and R195 contribute to the FMN site.

The protein belongs to the pyridoxamine 5'-phosphate oxidase family. FMN is required as a cofactor.

The catalysed reaction is (1R,6R)-1,4,5,5a,6,9-hexahydrophenazine-1,6-dicarboxylate + O2 = (1R,10aS)-1,4,10,10a-tetrahydrophenazine-1,6-dicarboxylate + H2O2. The enzyme catalyses (1R,10aS)-1,4,10,10a-tetrahydrophenazine-1,6-dicarboxylate + O2 = (5aS)-5,5a-dihydrophenazine-1,6-dicarboxylate + H2O2. It carries out the reaction (1R,10aS)-1,4,10,10a-tetrahydrophenazine-1-carboxylate + O2 = (10aS)-10,10a-dihydrophenazine-1-carboxylate + H2O2. It catalyses the reaction (1R)-1,4,5,10-tetrahydrophenazine-1-carboxylate + O2 = (10aS)-10,10a-dihydrophenazine-1-carboxylate + H2O2. It functions in the pathway antibiotic biosynthesis; phenazine biosynthesis. In terms of biological role, involved in the biosynthesis of the antibiotic phenazine, a nitrogen-containing heterocyclic molecule having important roles in virulence, competition and biological control. Catalyzes several oxidations in the terminal steps of core phenazine biosynthesis. It oxidizes both hexahydrophenazine-1,6-dicarboxylic acid (HHPDC) and tetrahydrophenazine-1-carboxylic acid (THPCA) and thereby contributes to the generation of both phenazine-1,6-dicarboxylic acid (PDC) and phenazine-1-carboxylic acid (PCA). It synthesizes phenazines in their reduced form, which are the likely end products in vivo. The sequence is that of Dihydrophenazinedicarboxylate synthase from Burkholderia lata (strain ATCC 17760 / DSM 23089 / LMG 22485 / NCIMB 9086 / R18194 / 383).